A 284-amino-acid polypeptide reads, in one-letter code: Bifunctional protein FolD (284 aa).

NADP(+) contacts are provided by residues 165–167 (GRS), serine 190, and valine 231.

The protein belongs to the tetrahydrofolate dehydrogenase/cyclohydrolase family. As to quaternary structure, homodimer.

The catalysed reaction is (6R)-5,10-methylene-5,6,7,8-tetrahydrofolate + NADP(+) = (6R)-5,10-methenyltetrahydrofolate + NADPH. The enzyme catalyses (6R)-5,10-methenyltetrahydrofolate + H2O = (6R)-10-formyltetrahydrofolate + H(+). It functions in the pathway one-carbon metabolism; tetrahydrofolate interconversion. Its function is as follows. Catalyzes the oxidation of 5,10-methylenetetrahydrofolate to 5,10-methenyltetrahydrofolate and then the hydrolysis of 5,10-methenyltetrahydrofolate to 10-formyltetrahydrofolate. The sequence is that of Bifunctional protein FolD from Geobacillus kaustophilus (strain HTA426).